Reading from the N-terminus, the 528-residue chain is Probable rhamnogalacturonate lyase A (528 aa).

The first 20 residues, 1–20 (MFFQTGLLLSLSLWTKVAYA), serve as a signal peptide directing secretion. 2 cysteine pairs are disulfide-bonded: C50/C93 and C184/C193. N56 carries N-linked (GlcNAc...) asparagine glycosylation. N351 carries N-linked (GlcNAc...) asparagine glycosylation.

Belongs to the polysaccharide lyase 4 family.

The protein localises to the secreted. The enzyme catalyses Endotype eliminative cleavage of L-alpha-rhamnopyranosyl-(1-&gt;4)-alpha-D-galactopyranosyluronic acid bonds of rhamnogalacturonan I domains in ramified hairy regions of pectin leaving L-rhamnopyranose at the reducing end and 4-deoxy-4,5-unsaturated D-galactopyranosyluronic acid at the non-reducing end.. Its function is as follows. Pectinolytic enzymes consist of four classes of enzymes: pectin lyase, polygalacturonase, pectin methylesterase and rhamnogalacturonase. Degrades the rhamnogalacturonan I (RG-I) backbone of pectin. Active against linseed rhamnogalacturonan. This is Probable rhamnogalacturonate lyase A (rglA) from Aspergillus clavatus (strain ATCC 1007 / CBS 513.65 / DSM 816 / NCTC 3887 / NRRL 1 / QM 1276 / 107).